Here is a 472-residue protein sequence, read N- to C-terminus: ATP synthase subunit beta (472 aa).

155–162 (GGAGVGKT) contacts ATP.

Belongs to the ATPase alpha/beta chains family. F-type ATPases have 2 components, CF(1) - the catalytic core - and CF(0) - the membrane proton channel. CF(1) has five subunits: alpha(3), beta(3), gamma(1), delta(1), epsilon(1). CF(0) has three main subunits: a(1), b(2) and c(9-12). The alpha and beta chains form an alternating ring which encloses part of the gamma chain. CF(1) is attached to CF(0) by a central stalk formed by the gamma and epsilon chains, while a peripheral stalk is formed by the delta and b chains.

The protein resides in the cell inner membrane. It catalyses the reaction ATP + H2O + 4 H(+)(in) = ADP + phosphate + 5 H(+)(out). In terms of biological role, produces ATP from ADP in the presence of a proton gradient across the membrane. The catalytic sites are hosted primarily by the beta subunits. The protein is ATP synthase subunit beta of Fervidobacterium nodosum (strain ATCC 35602 / DSM 5306 / Rt17-B1).